The chain runs to 361 residues: Alanine racemase 2 (361 aa).

The active-site Proton acceptor; specific for D-alanine is Lys-30. Lys-30 bears the N6-(pyridoxal phosphate)lysine mark. Arg-122 contacts substrate. Tyr-256 (proton acceptor; specific for L-alanine) is an active-site residue. Substrate is bound at residue Met-303.

This sequence belongs to the alanine racemase family. The cofactor is pyridoxal 5'-phosphate.

The enzyme catalyses L-alanine = D-alanine. It participates in amino-acid biosynthesis; D-alanine biosynthesis; D-alanine from L-alanine: step 1/1. Its function is as follows. Catalyzes the interconversion of L-alanine and D-alanine. May also act on other amino acids. The chain is Alanine racemase 2 (alr2) from Staphylococcus aureus (strain COL).